The primary structure comprises 422 residues: uncharacterized protein (422 aa).

12 helical membrane passes run 23–43 (IVKI…LIYD), 47–67 (AIGT…LAPV), 90–110 (AIVL…WFVM), 112–132 (LMIV…ALIP), 151–171 (AQIV…FISP), 172–192 (SYTM…VLFI), 228–248 (ILYP…PWEA), 263–283 (IVYS…GFVL), 291–308 (YGLL…AFFI), 318–340 (VFFA…YTII), 352–372 (VYAV…VICG), and 381–401 (GKVI…ILLF).

Belongs to the major facilitator superfamily.

It localises to the cell membrane. This is an uncharacterized protein from Bacillus subtilis (strain 168).